The chain runs to 137 residues: Large ribosomal subunit protein uL16c (137 aa).

Belongs to the universal ribosomal protein uL16 family. Part of the 50S ribosomal subunit.

It is found in the plastid. This is Large ribosomal subunit protein uL16c from Cuscuta reflexa (Southern Asian dodder).